Consider the following 31-residue polypeptide: Cytochrome b6-f complex subunit 6 (31 aa).

A helical membrane pass occupies residues 4–24 (LTSYFGFLLAALTITPALFIG).

The protein belongs to the PetL family. In terms of assembly, the 4 large subunits of the cytochrome b6-f complex are cytochrome b6, subunit IV (17 kDa polypeptide, PetD), cytochrome f and the Rieske protein, while the 4 small subunits are PetG, PetL, PetM and PetN. The complex functions as a dimer.

The protein localises to the plastid. Its subcellular location is the chloroplast thylakoid membrane. Functionally, component of the cytochrome b6-f complex, which mediates electron transfer between photosystem II (PSII) and photosystem I (PSI), cyclic electron flow around PSI, and state transitions. PetL is important for photoautotrophic growth as well as for electron transfer efficiency and stability of the cytochrome b6-f complex. This is Cytochrome b6-f complex subunit 6 from Agrostis stolonifera (Creeping bentgrass).